Consider the following 855-residue polypeptide: Zinc finger protein 814 (855 aa).

One can recognise a KRAB domain in the interval 15-91 (VTFEDVAVNF…PMAGVSPKKA (77 aa)). A C2H2-type 1; degenerate zinc finger spans residues 120–142 (HRCEAWGNKLYDSGNFHQHQNEH). 22 C2H2-type zinc fingers span residues 242–264 (YVCCECGKSFSKYASLSNHQRVH), 269–291 (HECGECGKSFSKYVSFSNHQRVH), 296–318 (HECGECGKSFSKYVSFSNHQRVH), 324–346 (YECGECGKSFSKYASFSNHQRVH), 352–374 (YECGECGKSFSKYVSFSNHQRVH), 380–402 (YECGECGKSFSKYASFSNHQRVH), 408–430 (YECGECGKSFSQKSSLIQHQRFH), 436–458 (YGCEECGKSFSSEGHLRSHQRVH), 464–486 (FKCGECVKSFSHKRSLVHHQRVH), 492–514 (YQCGECGKSFSQKGNLVLHQRVH), 520–542 (YECGECGKSFSSKGHLRNHQQIH), 548–570 (YECGECGKSFSHKGTLILHQRVH), 576–598 (YGCGECGKSFSSIGHLRSHQRVH), 604–626 (YECGECGKSFSHKRSLVHHQRMH), 632–654 (YKCGDCGKSFNEKGHLRNHQRVH), 660–682 (FKCGECGKCFSHKGNLILHQHGH), 688–710 (YVCRECGKLFKKKSHLLVHQRIH), 716–738 (YACEACQKFFRNKYQLIAHQRVH), 744–766 (YECNDCGKSFTHSSTFCVHKRIH), 772–794 (YECSECGKSFAESSSFTKHKRVH), 800–822 (YECSECGKSFAESSSLTKHKRVH), and 828–850 (YKCEKCGKLFNKKSHLLVHQSSH). A Glycyl lysine isopeptide (Lys-Gly) (interchain with G-Cter in SUMO2) cross-link involves residue K335. Residue K391 forms a Glycyl lysine isopeptide (Lys-Gly) (interchain with G-Cter in SUMO2) linkage.

The polypeptide is Zinc finger protein 814 (ZNF814) (Homo sapiens (Human)).